The following is a 230-amino-acid chain: Ribonuclease 3 (230 aa).

Residues tyrosine 5–aspartate 125 form the RNase III domain. Glutamate 40 lines the Mg(2+) pocket. Aspartate 44 is a catalytic residue. Positions 111 and 114 each coordinate Mg(2+). Glutamate 114 is an active-site residue. The DRBM domain maps to aspartate 153–glutamine 223.

It belongs to the ribonuclease III family. Homodimer. Mg(2+) serves as cofactor.

Its subcellular location is the cytoplasm. It carries out the reaction Endonucleolytic cleavage to 5'-phosphomonoester.. Its function is as follows. Digests double-stranded RNA. Involved in the processing of primary rRNA transcript to yield the immediate precursors to the large and small rRNAs (23S and 16S). Processes some mRNAs, and tRNAs when they are encoded in the rRNA operon. Processes pre-crRNA and tracrRNA of type II CRISPR loci if present in the organism. The protein is Ribonuclease 3 of Francisella tularensis subsp. holarctica (strain FTNF002-00 / FTA).